The following is a 148-amino-acid chain: Small ribosomal subunit protein eS12B (148 aa).

The protein belongs to the eukaryotic ribosomal protein eS12 family. In terms of assembly, component of the small ribosomal subunit (SSU). Mature yeast ribosomes consist of a small (40S) and a large (60S) subunit. The 40S small subunit contains 1 molecule of ribosomal RNA (18S rRNA) and at least 33 different proteins. The large 60S subunit contains 3 rRNA molecules (25S, 5.8S and 5S rRNA) and at least 46 different proteins.

It localises to the cytoplasm. Its function is as follows. Component of the ribosome, a large ribonucleoprotein complex responsible for the synthesis of proteins in the cell. The small ribosomal subunit (SSU) binds messenger RNAs (mRNAs) and translates the encoded message by selecting cognate aminoacyl-transfer RNA (tRNA) molecules. The large subunit (LSU) contains the ribosomal catalytic site termed the peptidyl transferase center (PTC), which catalyzes the formation of peptide bonds, thereby polymerizing the amino acids delivered by tRNAs into a polypeptide chain. The nascent polypeptides leave the ribosome through a tunnel in the LSU and interact with protein factors that function in enzymatic processing, targeting, and the membrane insertion of nascent chains at the exit of the ribosomal tunnel. The sequence is that of Small ribosomal subunit protein eS12B (rps1202) from Schizosaccharomyces pombe (strain 972 / ATCC 24843) (Fission yeast).